Here is a 237-residue protein sequence, read N- to C-terminus: Uridylate kinase (237 aa).

12 to 15 contacts ATP; the sequence is KLSG. Positions 20 to 25 are involved in allosteric activation by GTP; that stretch reads GEDGLG. Gly54 provides a ligand contact to UMP. 2 residues coordinate ATP: Gly55 and Arg59. Residues Asp74 and 135–142 contribute to the UMP site; that span reads TGNPFFTT. ATP contacts are provided by Thr162, Tyr168, and Asp171.

Belongs to the UMP kinase family. Homohexamer.

It is found in the cytoplasm. It catalyses the reaction UMP + ATP = UDP + ADP. It participates in pyrimidine metabolism; CTP biosynthesis via de novo pathway; UDP from UMP (UMPK route): step 1/1. With respect to regulation, allosterically activated by GTP. Inhibited by UTP. Its function is as follows. Catalyzes the reversible phosphorylation of UMP to UDP. The protein is Uridylate kinase (pyrH) of Haemophilus influenzae (strain ATCC 51907 / DSM 11121 / KW20 / Rd).